We begin with the raw amino-acid sequence, 408 residues long: Putative transporter AmpG 2 (408 aa).

12 helical membrane-spanning segments follow: residues 11-31 (IFNI…YLLT), 49-69 (IGLF…GPLL), 84-104 (YCLV…TSFN), 110-130 (TPFV…DMLI), 154-174 (FRIG…IISW), 177-197 (VYRT…FYPL), 224-244 (WIVI…LSIM), 261-281 (IGYK…GGFL), 294-311 (VLIY…LYFL), 315-337 (IISL…SPFF), 353-373 (IALI…ISGY), and 382-402 (YFFI…LYLP).

Belongs to the major facilitator superfamily.

Its subcellular location is the cell inner membrane. This is Putative transporter AmpG 2 (ampG2) from Rickettsia typhi (strain ATCC VR-144 / Wilmington).